The primary structure comprises 642 residues: 1-deoxy-D-xylulose-5-phosphate synthase (642 aa).

Thiamine diphosphate-binding positions include H79 and 120-122 (GHS). Position 151 (D151) interacts with Mg(2+). Residues 152–153 (GS), N180, Y290, and E372 each bind thiamine diphosphate. Residue N180 participates in Mg(2+) binding.

The protein belongs to the transketolase family. DXPS subfamily. Homodimer. Requires Mg(2+) as cofactor. It depends on thiamine diphosphate as a cofactor.

It carries out the reaction D-glyceraldehyde 3-phosphate + pyruvate + H(+) = 1-deoxy-D-xylulose 5-phosphate + CO2. It participates in metabolic intermediate biosynthesis; 1-deoxy-D-xylulose 5-phosphate biosynthesis; 1-deoxy-D-xylulose 5-phosphate from D-glyceraldehyde 3-phosphate and pyruvate: step 1/1. Functionally, catalyzes the acyloin condensation reaction between C atoms 2 and 3 of pyruvate and glyceraldehyde 3-phosphate to yield 1-deoxy-D-xylulose-5-phosphate (DXP). The sequence is that of 1-deoxy-D-xylulose-5-phosphate synthase from Rhodospirillum centenum (strain ATCC 51521 / SW).